A 147-amino-acid polypeptide reads, in one-letter code: Peptide methionine sulfoxide reductase MsrB (147 aa).

In terms of domain architecture, MsrB spans 8–131; the sequence is KEELKKVLTE…NSASLKFIPK (124 aa). The Nucleophile role is filled by C120.

The protein belongs to the MsrB Met sulfoxide reductase family.

The catalysed reaction is L-methionyl-[protein] + [thioredoxin]-disulfide + H2O = L-methionyl-(R)-S-oxide-[protein] + [thioredoxin]-dithiol. This chain is Peptide methionine sulfoxide reductase MsrB, found in Clostridium perfringens (strain ATCC 13124 / DSM 756 / JCM 1290 / NCIMB 6125 / NCTC 8237 / Type A).